Reading from the N-terminus, the 478-residue chain is Solute carrier family 2, facilitated glucose transporter member 8 (478 aa).

The interval 1 to 20 (MTPEDQEETQPLLRPPGGSA) is disordered. Over 1–25 (MTPEDQEETQPLLRPPGGSAPRGRR) the chain is Cytoplasmic. The span at 11 to 20 (PLLRPPGGSA) shows a compositional bias: low complexity. The Dileucine internalization motif motif lies at 12-13 (LL). A helical membrane pass occupies residues 26–46 (VFLAAFAAALGPLSFGFALGY). Residues 47–70 (SSPAIPSLRRAAPPAPHLDEDAAS) lie on the Extracellular side of the membrane. The chain crosses the membrane as a helical span at residues 71-91 (WFGAIVTLGAAAGGVLGGWLL). Over 92–97 (DRAGRK) the chain is Cytoplasmic. The chain crosses the membrane as a helical span at residues 98-118 (LSLVLCALPFVAGFAVITAAQ). The Extracellular segment spans residues 119 to 127 (NLWMLLGGR). A helical membrane pass occupies residues 128-148 (LLTGLACGIASLVAPVYISEI). Residues 149-158 (AYPEVRGLLG) are Cytoplasmic-facing. A helical transmembrane segment spans residues 159–179 (SCVQLMVVTGILLAYLAGWVL). D-glucose is bound at residue Gln-162. At 180 to 182 (EWR) the chain is on the extracellular side. The chain crosses the membrane as a helical span at residues 183 to 203 (WLAVLGCVPPSFMLLLMCFMP). The Cytoplasmic portion of the chain corresponds to 204 to 257 (ETPRFLLSQHKHQEAMAAMQFLWGYAQGWEEPPLGAQHQDFHVAQLRRPGVYKP). A helical transmembrane segment spans residues 258–278 (FIIGISLMAFQQLSGVNAVMF). Residues 268–269 (QQ) and Asn-274 contribute to the D-glucose site. Topologically, residues 279 to 293 (YAETIFEEAKFKDSS) are extracellular. Residues 294-314 (LASVVVGVIQVLFTATAALIM) traverse the membrane as a helical segment. Topologically, residues 315 to 320 (DRAGRR) are cytoplasmic. Residues 321–341 (LLLTLSGVVMVFSTSAFGTYF) form a helical membrane-spanning segment. The Extracellular segment spans residues 342-368 (KLTEGGPSNSSHVDLPALVSMEAADTN). N-linked (GlcNAc...) asparagine glycosylation is present at Asn-350. Residues 369-389 (VGLAWLAVGSMCLFIAGFAVG) traverse the membrane as a helical segment. Residues 390–405 (WGPIPWLLMSEIFPLH) are Cytoplasmic-facing. Trp-395 is a binding site for D-glucose. The helical transmembrane segment at 406–426 (VKGVATGVCVLTNWFMAFLVT) threads the bilayer. Residues 427 to 439 (KEFSSLMEVLRPY) are Extracellular-facing. A helical transmembrane segment spans residues 440–460 (GAFWLASAFCIFGVLFTLACV). At 461–478 (PETKGKTLEQITAHFEGR) the chain is on the cytoplasmic side.

This sequence belongs to the major facilitator superfamily. Sugar transporter (TC 2.A.1.1) family. Glucose transporter subfamily. As to quaternary structure, interacts with AP2B1. As to expression, abundantly expressed in testis and more moderately in lung, kidney, spleen, intestine, skeletal muscle, liver and mammary gland.

The protein localises to the cell membrane. The protein resides in the cytoplasmic vesicle membrane. The enzyme catalyses D-glucose(out) = D-glucose(in). It carries out the reaction D-fructose(out) = D-fructose(in). It catalyses the reaction L-dehydroascorbate(out) = L-dehydroascorbate(in). The catalysed reaction is alpha,alpha-trehalose(in) = alpha,alpha-trehalose(out). Its activity is regulated as follows. Inhibited by cytochalasin B. Insulin-regulated facilitative hexose transporter that mediates the transport of glucose and fructose. Facilitates hepatic influx of dietary trehalose, which in turn inhibits glucose and fructose influx triggering a starvation signal and hepatic autophagy through activation of AMPK and ULK1. Also able to mediate the transport of dehydroascorbate. This Bos taurus (Bovine) protein is Solute carrier family 2, facilitated glucose transporter member 8.